A 73-amino-acid chain; its full sequence is Putative defensin-like protein 277 (73 aa).

Residues 1–24 (MSAQKIYLASLLLFICLVFPQSTA) form the signal peptide. 4 cysteine pairs are disulfide-bonded: Cys-27-Cys-64, Cys-33-Cys-52, Cys-39-Cys-62, and Cys-43-Cys-63.

It belongs to the DEFL family.

The protein localises to the secreted. The chain is Putative defensin-like protein 277 from Arabidopsis thaliana (Mouse-ear cress).